Reading from the N-terminus, the 146-residue chain is Transcriptional regulator MraZ (146 aa).

2 SpoVT-AbrB domains span residues 5 to 48 (TSYH…TLEE) and 77 to 120 (ASEC…SRAK).

The protein belongs to the MraZ family. Forms oligomers.

Its subcellular location is the cytoplasm. It localises to the nucleoid. In Desulfosudis oleivorans (strain DSM 6200 / JCM 39069 / Hxd3) (Desulfococcus oleovorans), this protein is Transcriptional regulator MraZ.